Here is a 93-residue protein sequence, read N- to C-terminus: Phosphoribosyl-ATP pyrophosphatase (93 aa).

It belongs to the PRA-PH family.

It is found in the cytoplasm. The enzyme catalyses 1-(5-phospho-beta-D-ribosyl)-ATP + H2O = 1-(5-phospho-beta-D-ribosyl)-5'-AMP + diphosphate + H(+). Its pathway is amino-acid biosynthesis; L-histidine biosynthesis; L-histidine from 5-phospho-alpha-D-ribose 1-diphosphate: step 2/9. The sequence is that of Phosphoribosyl-ATP pyrophosphatase from Mycolicibacterium vanbaalenii (strain DSM 7251 / JCM 13017 / BCRC 16820 / KCTC 9966 / NRRL B-24157 / PYR-1) (Mycobacterium vanbaalenii).